Reading from the N-terminus, the 181-residue chain is Oligoribonuclease (181 aa).

The 164-residue stretch at 8–171 folds into the Exonuclease domain; the sequence is LIWIDLEMTG…QDIQESIAEL (164 aa). Y129 is an active-site residue.

Belongs to the oligoribonuclease family.

It is found in the cytoplasm. In terms of biological role, 3'-to-5' exoribonuclease specific for small oligoribonucleotides. The protein is Oligoribonuclease of Shewanella sp. (strain MR-4).